Consider the following 381-residue polypeptide: Choline transport ATP-binding protein OpuBA (381 aa).

In terms of domain architecture, ABC transporter spans 2–236 (LTLENVSKTY…PADEFVEEFI (235 aa)). Residue 35 to 42 (GPSGCGKT) participates in ATP binding. 2 CBS domains span residues 256-314 (MNTQ…LVSE) and 316-374 (LHED…WGEE).

Belongs to the ABC transporter superfamily.

In terms of biological role, involved in a high affinity multicomponent binding-protein-dependent transport system for choline. Probably responsible for energy coupling to the transport system. This is Choline transport ATP-binding protein OpuBA (opuBA) from Bacillus subtilis (strain 168).